The sequence spans 255 residues: Ribonuclease PH (255 aa).

Residues arginine 86 and 124–126 contribute to the phosphate site; that span reads GTR.

This sequence belongs to the RNase PH family. In terms of assembly, homohexameric ring arranged as a trimer of dimers.

It carries out the reaction tRNA(n+1) + phosphate = tRNA(n) + a ribonucleoside 5'-diphosphate. Its function is as follows. Phosphorolytic 3'-5' exoribonuclease that plays an important role in tRNA 3'-end maturation. Removes nucleotide residues following the 3'-CCA terminus of tRNAs; can also add nucleotides to the ends of RNA molecules by using nucleoside diphosphates as substrates, but this may not be physiologically important. Probably plays a role in initiation of 16S rRNA degradation (leading to ribosome degradation) during starvation. The sequence is that of Ribonuclease PH from Hydrogenobaculum sp. (strain Y04AAS1).